The sequence spans 374 residues: Chaperone protein DnaJ (374 aa).

In terms of domain architecture, J spans 5–70 (DYYEVLGVAK…QKRAAYDRYG (66 aa)). The CR-type zinc-finger motif lies at 134 to 212 (GFDTEIRVPS…CDGVGRIRRN (79 aa)). The Zn(2+) site is built by Cys147, Cys150, Cys164, Cys167, Cys186, Cys189, Cys200, and Cys203. 4 CXXCXGXG motif repeats span residues 147–154 (CDTCHGSG), 164–171 (CRTCGGSG), 186–193 (CPTCHGTG), and 200–207 (CPSCDGVG).

It belongs to the DnaJ family. In terms of assembly, homodimer. The cofactor is Zn(2+).

Its subcellular location is the cytoplasm. In terms of biological role, participates actively in the response to hyperosmotic and heat shock by preventing the aggregation of stress-denatured proteins and by disaggregating proteins, also in an autonomous, DnaK-independent fashion. Unfolded proteins bind initially to DnaJ; upon interaction with the DnaJ-bound protein, DnaK hydrolyzes its bound ATP, resulting in the formation of a stable complex. GrpE releases ADP from DnaK; ATP binding to DnaK triggers the release of the substrate protein, thus completing the reaction cycle. Several rounds of ATP-dependent interactions between DnaJ, DnaK and GrpE are required for fully efficient folding. Also involved, together with DnaK and GrpE, in the DNA replication of plasmids through activation of initiation proteins. The sequence is that of Chaperone protein DnaJ from Bordetella petrii (strain ATCC BAA-461 / DSM 12804 / CCUG 43448).